A 92-amino-acid polypeptide reads, in one-letter code: METPLEKALTTMVTTFHKYSGREGSKLTLSRKELKELIKKELCLGEMKESSIDDLMKSLDKNSDQEIDFKEYSVFLTMLCMAYNDFFLEDNK.

EF-hand domains follow at residues 12–47 (MVTT…LGEM) and 47–82 (MKES…LCMA). Thr-28, Glu-33, Asp-60, Asn-62, Asp-64, Glu-66, and Glu-71 together coordinate Ca(2+).

Belongs to the S-100 family. Homodimer.

Its function is as follows. Binds calcium, zinc and copper. One subunit can simultaneously bind 2 calcium ions or 2 copper ions plus 1 zinc ion. Calcium and copper ions compete for the same binding sites. This is Protein S100-A5 (S100A5) from Homo sapiens (Human).